Consider the following 590-residue polypeptide: Muscarinic acetylcholine receptor M3 (590 aa).

Residues 1–67 lie on the Extracellular side of the membrane; it reads MTLHNNSTTS…DPLGGHTVWQ (67 aa). 5 N-linked (GlcNAc...) asparagine glycosylation sites follow: Asn-5, Asn-6, Asn-15, Asn-41, and Asn-48. Residues 68–91 form a helical membrane-spanning segment; that stretch reads VVFIAFLTGILALVTIIGNILVIV. The Cytoplasmic segment spans residues 92–104; the sequence is SFKVNKQLKTVNN. Residues 105–130 traverse the membrane as a helical segment; the sequence is YFLLSLACADLIIGVISMNLFTTYII. The Extracellular segment spans residues 131 to 142; the sequence is MNRWALGNLACD. Cys-141 and Cys-221 form a disulfide bridge. Residues 143-164 form a helical membrane-spanning segment; that stretch reads LWLAIDYVASNASVMNLLVISF. Topologically, residues 165–184 are cytoplasmic; the sequence is DRYFSITRPLTYRAKRTTKR. The helical transmembrane segment at 185–206 threads the bilayer; sequence AGVMIGLAWVISFVLWAPAILF. The Extracellular segment spans residues 207–229; sequence WQYFVGKRTVPPGECFIQFLSEP. The helical transmembrane segment at 230–252 threads the bilayer; that stretch reads TITFGTAIAAFYMPVTIMTILYW. The Cytoplasmic portion of the chain corresponds to 253-491; the sequence is RIYKETEKRT…SLVKEKKAAQ (239 aa). Residues 275-281 carry the Basolateral sorting signal motif; the sequence is AETENFV. The tract at residues 323–357 is disordered; it reads SSEQMDQDHSSSDSWNNNDAAASLENSASSDEEDI. Residues 334–345 are compositionally biased toward low complexity; it reads SDSWNNNDAAAS. Ser-385 is subject to Phosphoserine. A helical transmembrane segment spans residues 492-514; it reads TLSAILLAFIITWTPYNIMVLVN. The Extracellular portion of the chain corresponds to 515-526; that stretch reads TFCDSCIPKTFW. Cys-517 and Cys-520 form a disulfide bridge. A helical transmembrane segment spans residues 527–546; that stretch reads NLGYWLCYINSTVNPVCYAL. Residues 547–590 are Cytoplasmic-facing; sequence CNKTFRTTFKMLLLCQCGKKKRRKQQYQQRQSVIFHKRAPEQAL.

The protein belongs to the G-protein coupled receptor 1 family. Muscarinic acetylcholine receptor subfamily. CHRM3 sub-subfamily. As to quaternary structure, homodimer; the dimers can form tetramers. Interacts with NALCN. Interacts with TMEM147.

The protein resides in the cell membrane. Its subcellular location is the postsynaptic cell membrane. It localises to the basolateral cell membrane. The protein localises to the endoplasmic reticulum membrane. In terms of biological role, the muscarinic acetylcholine receptor mediates various cellular responses, including inhibition of adenylate cyclase, breakdown of phosphoinositides and modulation of potassium channels through the action of G proteins. Primary transducing effect is Pi turnover. The protein is Muscarinic acetylcholine receptor M3 (CHRM3) of Gorilla gorilla gorilla (Western lowland gorilla).